Consider the following 213-residue polypeptide: Thymidylate kinase (213 aa).

10–17 contributes to the ATP binding site; sequence GLEGAGKT.

Belongs to the thymidylate kinase family.

It catalyses the reaction dTMP + ATP = dTDP + ADP. Phosphorylation of dTMP to form dTDP in both de novo and salvage pathways of dTTP synthesis. The sequence is that of Thymidylate kinase from Escherichia coli O7:K1 (strain IAI39 / ExPEC).